Consider the following 258-residue polypeptide: Imidazole glycerol phosphate synthase subunit HisF (258 aa).

Active-site residues include D11 and D130.

Belongs to the HisA/HisF family. Heterodimer of HisH and HisF.

It is found in the cytoplasm. The catalysed reaction is 5-[(5-phospho-1-deoxy-D-ribulos-1-ylimino)methylamino]-1-(5-phospho-beta-D-ribosyl)imidazole-4-carboxamide + L-glutamine = D-erythro-1-(imidazol-4-yl)glycerol 3-phosphate + 5-amino-1-(5-phospho-beta-D-ribosyl)imidazole-4-carboxamide + L-glutamate + H(+). It functions in the pathway amino-acid biosynthesis; L-histidine biosynthesis; L-histidine from 5-phospho-alpha-D-ribose 1-diphosphate: step 5/9. In terms of biological role, IGPS catalyzes the conversion of PRFAR and glutamine to IGP, AICAR and glutamate. The HisF subunit catalyzes the cyclization activity that produces IGP and AICAR from PRFAR using the ammonia provided by the HisH subunit. The chain is Imidazole glycerol phosphate synthase subunit HisF from Salmonella agona (strain SL483).